A 256-amino-acid chain; its full sequence is DNA repair protein RecO (256 aa).

This sequence belongs to the RecO family.

Functionally, involved in DNA repair and RecF pathway recombination. The polypeptide is DNA repair protein RecO (Rhizobium johnstonii (strain DSM 114642 / LMG 32736 / 3841) (Rhizobium leguminosarum bv. viciae)).